Here is a 285-residue protein sequence, read N- to C-terminus: Coagulation factor IX (285 aa).

Tyrosine 23 carries the sulfotyrosine modification. N-linked (GlcNAc...) asparagine glycosylation occurs at asparagine 25. Threonine 27 is modified (phosphothreonine; alternate). A glycan (O-linked (GalNAc...) threonine; alternate) is linked at threonine 27. N-linked (GlcNAc...) asparagine glycosylation occurs at asparagine 45. Threonine 47 carries an O-linked (GalNAc...) threonine glycan. The region spanning 59-285 (VVGGEDAKPG…YTKVSRYVNW (227 aa)) is the Peptidase S1 domain. A disulfide bond links cysteine 84 and cysteine 100. Histidine 99 (charge relay system) is an active-site residue. Ca(2+) is bound by residues asparagine 115, glutamate 120, and glutamate 123. Residues asparagine 127 and asparagine 138 are each glycosylated (N-linked (GlcNAc...) asparagine). Aspartate 147 (charge relay system) is an active-site residue. Intrachain disulfides connect cysteine 214-cysteine 228 and cysteine 239-cysteine 267. Serine 243 functions as the Charge relay system in the catalytic mechanism.

It belongs to the peptidase S1 family. In terms of assembly, heterodimer of a light chain and a heavy chain; disulfide-linked. Interacts (inactive and activated) with F11 (activated) in calcium-dependent manner. Interacts with SERPINC1. In terms of processing, activated by factor XIa, which excises the activation peptide. The propeptide can also be removed by snake venom protease. Activated by coagulation factor VIIa-tissue factor (F7-F3) complex in calcium-dependent manner.

Its subcellular location is the secreted. The enzyme catalyses Selective cleavage of Arg-|-Ile bond in factor X to form factor Xa.. Factor IX is a vitamin K-dependent plasma protein that participates in the intrinsic pathway of blood coagulation by converting factor X to its active form in the presence of Ca(2+) ions, phospholipids, and factor VIIIa. This Cavia porcellus (Guinea pig) protein is Coagulation factor IX (F9).